The chain runs to 117 residues: Chondroitin proteoglycan 7 (117 aa).

An N-terminal signal peptide occupies residues 1–19 (MQTITLLALLACIAVPIFA). The interval 31–97 (VEASGEGSGE…SGENLSNGIV (67 aa)) is disordered. 2 stretches are compositionally biased toward low complexity: residues 32–41 (EASGEGSGES) and 48–57 (ESSGEGSGES). 5 O-linked (Xyl...) (chondroitin sulfate) serine glycosylation sites follow: Ser66, Ser70, Ser74, Ser84, and Ser88. Low complexity predominate over residues 75–95 (GASDAVLESSGEGSGENLSNG). An N-linked (GlcNAc...) asparagine glycan is attached at Asn91.

This chain is Chondroitin proteoglycan 7 (cpg-7), found in Caenorhabditis briggsae.